The primary structure comprises 273 residues: Dermonecrotic toxin SdSicTox-betaIIB1aiii (273 aa).

The active site involves His4. Residues Glu24 and Asp26 each contribute to the Mg(2+) site. His40 functions as the Nucleophile in the catalytic mechanism. 2 disulfides stabilise this stretch: Cys44/Cys50 and Cys46/Cys189. Asp84 provides a ligand contact to Mg(2+).

It belongs to the arthropod phospholipase D family. Class II subfamily. Mg(2+) serves as cofactor. Expressed by the venom gland.

It localises to the secreted. It carries out the reaction an N-(acyl)-sphingosylphosphocholine = an N-(acyl)-sphingosyl-1,3-cyclic phosphate + choline. It catalyses the reaction an N-(acyl)-sphingosylphosphoethanolamine = an N-(acyl)-sphingosyl-1,3-cyclic phosphate + ethanolamine. The catalysed reaction is a 1-acyl-sn-glycero-3-phosphocholine = a 1-acyl-sn-glycero-2,3-cyclic phosphate + choline. The enzyme catalyses a 1-acyl-sn-glycero-3-phosphoethanolamine = a 1-acyl-sn-glycero-2,3-cyclic phosphate + ethanolamine. In terms of biological role, dermonecrotic toxins cleave the phosphodiester linkage between the phosphate and headgroup of certain phospholipids (sphingolipid and lysolipid substrates), forming an alcohol (often choline) and a cyclic phosphate. This toxin acts on sphingomyelin (SM). It may also act on ceramide phosphoethanolamine (CPE), lysophosphatidylcholine (LPC) and lysophosphatidylethanolamine (LPE), but not on lysophosphatidylserine (LPS), and lysophosphatidylglycerol (LPG). It acts by transphosphatidylation, releasing exclusively cyclic phosphate products as second products. Induces dermonecrosis, hemolysis, increased vascular permeability, edema, inflammatory response, and platelet aggregation. The protein is Dermonecrotic toxin SdSicTox-betaIIB1aiii of Sicarius cf. damarensis (strain GJB-2008) (Six-eyed sand spider).